We begin with the raw amino-acid sequence, 119 residues long: Endocuticle structural glycoprotein SgAbd-3 (119 aa).

Residue Gln-1 is modified to Pyrrolidone carboxylic acid. A Chitin-binding type R&amp;R domain is found at 24 to 98; it reads DGSYRYSFET…PQGAHLPTPP (75 aa). The disordered stretch occupies residues 33-55; it reads TSDGQRASQEGALKQVSAPGPDG. O-linked (HexNAc...) threonine glycosylation is present at Thr-96.

In terms of biological role, component of the abdominal endocuticle. The polypeptide is Endocuticle structural glycoprotein SgAbd-3 (Schistocerca gregaria (Desert locust)).